The following is a 388-amino-acid chain: Pepsin A-5 (388 aa).

The N-terminal stretch at 1–15 is a signal peptide; it reads MKWLLLLGLVALSEC. Residues 16 to 62 constitute a propeptide, activation peptide; the sequence is IMYKVPLIRKKSLRRTLSERGLLKDFLKKHNLNPARKYFPQWEAPTL. Residues 76 to 385 form the Peptidase A1 domain; sequence YFGTIGIGTP…DRANNQVGLA (310 aa). Residue Asp-94 is part of the active site. Residues Cys-107 and Cys-112 are joined by a disulfide bond. At Ser-130 the chain carries Phosphoserine. Cys-268 and Cys-272 are oxidised to a cystine. The active site involves Asp-277. Residues Cys-311 and Cys-344 are joined by a disulfide bond.

The protein belongs to the peptidase A1 family.

It is found in the secreted. The catalysed reaction is Preferential cleavage: hydrophobic, preferably aromatic, residues in P1 and P1' positions. Cleaves 1-Phe-|-Val-2, 4-Gln-|-His-5, 13-Glu-|-Ala-14, 14-Ala-|-Leu-15, 15-Leu-|-Tyr-16, 16-Tyr-|-Leu-17, 23-Gly-|-Phe-24, 24-Phe-|-Phe-25 and 25-Phe-|-Tyr-26 bonds in the B chain of insulin.. Its function is as follows. Shows particularly broad specificity; although bonds involving phenylalanine and leucine are preferred, many others are also cleaved to some extent. This chain is Pepsin A-5 (PGA5), found in Homo sapiens (Human).